A 313-amino-acid polypeptide reads, in one-letter code: tRNA dimethylallyltransferase (313 aa).

17 to 24 (GPTASGKT) serves as a coordination point for ATP. Position 19 to 24 (19 to 24 (TASGKT)) interacts with substrate. 4 interaction with substrate tRNA regions span residues 42 to 45 (DSAL), 166 to 170 (QRLSR), 247 to 252 (RCVGYR), and 280 to 287 (KRQITWLR).

The protein belongs to the IPP transferase family. As to quaternary structure, monomer. Mg(2+) serves as cofactor.

It carries out the reaction adenosine(37) in tRNA + dimethylallyl diphosphate = N(6)-dimethylallyladenosine(37) in tRNA + diphosphate. Its function is as follows. Catalyzes the transfer of a dimethylallyl group onto the adenine at position 37 in tRNAs that read codons beginning with uridine, leading to the formation of N6-(dimethylallyl)adenosine (i(6)A). The protein is tRNA dimethylallyltransferase of Photorhabdus laumondii subsp. laumondii (strain DSM 15139 / CIP 105565 / TT01) (Photorhabdus luminescens subsp. laumondii).